The chain runs to 145 residues: Peptide methionine sulfoxide reductase MsrB (145 aa).

The 124-residue stretch at 4–127 folds into the MsrB domain; sequence SDELKQRIGE…NSAALKFIPY (124 aa). Cys116 (nucleophile) is an active-site residue.

Belongs to the MsrB Met sulfoxide reductase family.

It carries out the reaction L-methionyl-[protein] + [thioredoxin]-disulfide + H2O = L-methionyl-(R)-S-oxide-[protein] + [thioredoxin]-dithiol. The polypeptide is Peptide methionine sulfoxide reductase MsrB (Streptococcus pyogenes serotype M3 (strain ATCC BAA-595 / MGAS315)).